The following is a 410-amino-acid chain: Multifunctional CCA protein (410 aa).

Residues Gly8 and Arg11 each coordinate ATP. Positions 8 and 11 each coordinate CTP. The Mg(2+) site is built by Glu21 and Asp23. ATP contacts are provided by Arg91, Arg137, and Arg140. CTP is bound by residues Arg91, Arg137, and Arg140. In terms of domain architecture, HD spans 228–329 (TGVHVLSVLR…LELLQRFDVF (102 aa)).

This sequence belongs to the tRNA nucleotidyltransferase/poly(A) polymerase family. Bacterial CCA-adding enzyme type 1 subfamily. Monomer. Can also form homodimers and oligomers. Mg(2+) is required as a cofactor. Requires Ni(2+) as cofactor.

The catalysed reaction is a tRNA precursor + 2 CTP + ATP = a tRNA with a 3' CCA end + 3 diphosphate. It catalyses the reaction a tRNA with a 3' CCA end + 2 CTP + ATP = a tRNA with a 3' CCACCA end + 3 diphosphate. Its function is as follows. Catalyzes the addition and repair of the essential 3'-terminal CCA sequence in tRNAs without using a nucleic acid template. Adds these three nucleotides in the order of C, C, and A to the tRNA nucleotide-73, using CTP and ATP as substrates and producing inorganic pyrophosphate. tRNA 3'-terminal CCA addition is required both for tRNA processing and repair. Also involved in tRNA surveillance by mediating tandem CCA addition to generate a CCACCA at the 3' terminus of unstable tRNAs. While stable tRNAs receive only 3'-terminal CCA, unstable tRNAs are marked with CCACCA and rapidly degraded. The sequence is that of Multifunctional CCA protein from Ectopseudomonas mendocina (strain ymp) (Pseudomonas mendocina).